A 306-amino-acid chain; its full sequence is Putative syntaxin-3 (306 aa).

At 1–279 (MPRDRLKELQ…QKRARKMKVC (279 aa)) the chain is on the cytoplasmic side. A required for the regulation of the defecation motor program region spans residues 40–180 (QDADFEMFLE…QLSDEEIENA (141 aa)). In terms of domain architecture, t-SNARE coiled-coil homology spans 204 to 266 (YDEVKSRADE…KQARGNVEEA (63 aa)). The chain crosses the membrane as a helical; Anchor for type IV membrane protein span at residues 280–300 (IIIGSIIAVLILILFIQSAVC). Over 301 to 306 (HFTPIC) the chain is Extracellular.

It belongs to the syntaxin family. In terms of tissue distribution, expressed in body wall, pharyngeal, vulval and enteric muscles and in some head neurons.

The protein localises to the cell membrane. Its function is as follows. Potentially involved in docking of synaptic vesicles at presynaptic active zones. Acts in the intestine to regulate anterior body muscle contractions (aBOC) and the expulsion steps during the defecation motor program (DMP). The sequence is that of Putative syntaxin-3 from Caenorhabditis elegans.